The primary structure comprises 909 residues: Epithelial discoidin domain-containing receptor 1 (909 aa).

The first 18 residues, 1–18 (MGPEALSSLLLLLLVASG), serve as a signal peptide directing secretion. The Extracellular portion of the chain corresponds to 21-413 (DMKGHFDPAK…VAKAEGSPTA (393 aa)). The F5/8 type C domain maps to 31–181 (CRYALGMQDR…VCLRVELYGC (151 aa)). Disulfide bonds link Cys31–Cys181 and Cys70–Cys173. The segment covering 45–60 (SDISASSSWSDSTAAR) has biased composition (low complexity). The segment at 45–65 (SDISASSSWSDSTAARHSSDG) is disordered. Residues 188–363 (LSYTAPVGQT…LFSEISFISD (176 aa)) form a DS-like domain region. Asn207, Gln226, Asp229, Val231, Tyr249, and Tyr251 together coordinate Ca(2+). N-linked (GlcNAc...) asparagine glycosylation is present at Asn207. Asn256 carries an N-linked (GlcNAc...) asparagine glycan. Cys299 and Cys344 are joined by a disulfide. Residues Ser356 and Glu357 each contribute to the Ca(2+) site. Residues Asn366 and Asn390 are each glycosylated (N-linked (GlcNAc...) asparagine). A helical transmembrane segment spans residues 414–434 (ILIGCLVAIILLLLLIIALML). Over 435 to 909 (WRLHWRRLLS…FLAEDALNTV (475 aa)) the chain is Cytoplasmic. Positions 466 to 495 (ILINNRPGPREPPPYQEPRPRGNPPHSAPC) are disordered. Positions 475–492 (REPPPYQEPRPRGNPPHS) are enriched in pro residues. A PPxY motif motif is present at residues 477-480 (PPPY). Tyr480, Tyr509, and Tyr516 each carry phosphotyrosine; by autocatalysis. Residues 606–901 (LRFKEKLGEG…PPFSQLHRFL (296 aa)) form the Protein kinase domain. Residue 612 to 620 (LGEGQFGEV) coordinates ATP. Ser627 is modified (phosphoserine). Position 651 (Lys651) interacts with ATP. Position 736 is a phosphotyrosine; by autocatalysis (Tyr736). Asp762 acts as the Proton acceptor in catalysis. A phosphotyrosine; by autocatalysis mark is found at Tyr788, Tyr792, and Tyr793.

This sequence belongs to the protein kinase superfamily. Tyr protein kinase family. Insulin receptor subfamily. Homodimer. Interacts (via PPxY motif) with WWC1 (via WW domains) in a collagen-regulated manner. Forms a tripartite complex with WWC1 and PRKCZ, but predominantly in the absence of collagen. Interacts (tyrosine phosphorylated) with SHC1. Interacts with SRC. Interacts with MYH9. Interacts with CDH1. Interacts with PTPN11. Interacts with NCK2. Post-translationally, autophosphorylated in response to fibrillar collagen binding.

It localises to the cell membrane. The catalysed reaction is L-tyrosyl-[protein] + ATP = O-phospho-L-tyrosyl-[protein] + ADP + H(+). Functionally, tyrosine kinase that functions as a cell surface receptor for fibrillar collagen and regulates cell attachment to the extracellular matrix, remodeling of the extracellular matrix, cell migration, differentiation, survival and cell proliferation. Collagen binding triggers a signaling pathway that involves SRC and leads to the activation of MAP kinases. Regulates remodeling of the extracellular matrix by up-regulation of the matrix metalloproteinases MMP2, MMP7 and MMP9, and thereby facilitates cell migration and wound healing. Promotes smooth muscle cell migration, and thereby contributes to arterial wound healing. Also plays a role in tumor cell invasion. Phosphorylates PTPN11. Required for normal blastocyst implantation during pregnancy, for normal mammary gland differentiation and normal lactation. Required for normal ear morphology and normal hearing. The sequence is that of Epithelial discoidin domain-containing receptor 1 (DDR1) from Pan troglodytes (Chimpanzee).